The primary structure comprises 573 residues: ESX-1 secretion system protein EccA1 (573 aa).

334 to 341 provides a ligand contact to ATP; the sequence is GPPGTGKT.

This sequence belongs to the CbxX/CfxQ family. As to quaternary structure, part of the ESX-1 / type VII secretion system (T7SS), which is composed of cytosolic and membrane components.

It is found in the cytoplasm. In terms of biological role, part of the ESX-1 / type VII specialized secretion system (T7SS), which exports several proteins including EsxA and EsxB. EccA1 exhibits ATPase activity and may provide energy for the export of ESX-1 substrates. This chain is ESX-1 secretion system protein EccA1, found in Mycobacterium leprae (strain TN).